We begin with the raw amino-acid sequence, 543 residues long: MTPGELRRLYLIVRVFLSYGLDELIPQMRLTLPLRVGRRLLFWMPNRHADKPLGERLRLALQELGPVWIKFGQMMSTRRDLFPPQIADQLTLLQDRVAPFDGALARKHIELAMGGPLETWFDDFDQQALASASIAQVHTARLKTTGQEVVLKVIRPDIRPIIKADVRLMYRLAAWVPKLMPDGRRLRPREVVREYEKTLLDELNLLREAANAIQLRRNFDGSPMLYVPEVYSDYCRESVLVMERIYGIPVSDIPTLEKQGTNMKLLAERGVQVFFTQVFRDSFFHADMHPGNIFVSYEHPEDPCYIGIDCGIVGSLNKDDKRYLAENFIAFFNRDYRKVAELHVDSGWVPRDTNVEDFEFAIRTVCEPIFEKPLSEISFGNVLLNLFNTARRFNMEVQPQLVLLQKTLLYVEGLGRQLYPQLDLWTTAKPFLESWMRDQVGIPAVIRALKEKAPFWAEKLPELPELFYDSLQQHKLLQQSVDKLTNQMQAQRVRQGQSRYLFGVGATLLVSGTILLSGDVEVFPAWLIAAGIVSWVIGWKRTT.

The 379-residue stretch at 123-501 (DFDQQALASA…RVRQGQSRYL (379 aa)) folds into the Protein kinase domain. Residues 129-137 (LASASIAQV) and Lys-152 each bind ATP. Asp-287 (proton acceptor) is an active-site residue. 2 consecutive transmembrane segments (helical) span residues 498-518 (SRYL…LLSG) and 519-539 (DVEV…VIGW).

This sequence belongs to the ABC1 family. UbiB subfamily.

Its subcellular location is the cell inner membrane. The protein operates within cofactor biosynthesis; ubiquinone biosynthesis [regulation]. In terms of biological role, is probably a protein kinase regulator of UbiI activity which is involved in aerobic coenzyme Q (ubiquinone) biosynthesis. This chain is Probable protein kinase UbiB, found in Serratia proteamaculans (strain 568).